Consider the following 644-residue polypeptide: Sodium/hydrogen exchanger 9 (644 aa).

Over 1–20 the chain is Lumenal; that stretch reads MAGQLRLTSGKDEDHFQHQG. A helical membrane pass occupies residues 21 to 41; sequence AVELLAFNFLLILTILTIWLF. The Cytoplasmic portion of the chain corresponds to 42 to 45; that stretch reads KNHR. The helical transmembrane segment at 46–66 threads the bilayer; it reads FRFLHETGGAMVYGLIMGLIL. At 67 to 126 the chain is on the lumenal side; the sequence is RYATAPTDIDSGTVYNCGKLLFSPSTLLVNITDQVYEYKYQREINQHNISPHQGNAILEK. A helical transmembrane segment spans residues 127–147; that stretch reads MTFDPEIFFNVLLPPIIFHAG. Topologically, residues 148-164 are cytoplasmic; the sequence is YSLKKRHFFQNLGSILT. A helical membrane pass occupies residues 165 to 185; that stretch reads YAFLGTAISCVVIGLIMYGFV. The Lumenal segment spans residues 186-203; sequence KAMVHAGQLKSGDFHFTD. The helical transmembrane segment at 204–224 threads the bilayer; that stretch reads CLFFGSLMSATDPVTVLAIFH. Over 225–235 the chain is Cytoplasmic; sequence ELHVDPDLYTL. The helical transmembrane segment at 236–256 threads the bilayer; sequence LFGESVLNDAVAIVLTYSISI. Residues 257-277 lie on the Lumenal side of the membrane; that stretch reads YSPKENPNAFDTAAFFQSVGN. Residues 278 to 298 form a helical membrane-spanning segment; that stretch reads FLGIFAGSFAMGSAYAVVTAL. At 299–309 the chain is on the cytoplasmic side; it reads LTKFTKLREFP. A helical membrane pass occupies residues 310 to 327; the sequence is MLETGLFFLLSWSAFLSA. Residues 328–333 lie on the Lumenal side of the membrane; sequence EAAGLT. Residues 334 to 350 form a helical membrane-spanning segment; sequence GIVAVLFCGVTQAHYTY. The Cytoplasmic segment spans residues 351–364; that stretch reads NNLSSDSKLRTKQL. A helical transmembrane segment spans residues 365-385; the sequence is FEFMNFLAENVIFCYMGLALF. A topological domain (lumenal) is located at residue threonine 386. The helical transmembrane segment at 387 to 407 threads the bilayer; the sequence is FQNHIFNALFILGAFLAIFVA. Over 408-429 the chain is Cytoplasmic; the sequence is RACNIYPLSFLLNLGRKQKIPW. Residues 430-450 traverse the membrane as a helical segment; the sequence is NFQHMMMFSGLRGAIAFALAI. The Lumenal segment spans residues 451-465; that stretch reads RNTESQPKQMMFTTT. Residues 466 to 486 form a helical membrane-spanning segment; the sequence is LLLVFFTVWVFGGGTTPMLTW. The Cytoplasmic segment spans residues 487–644; that stretch reads LQIRVGVDLD…EQTRGQPQMD (158 aa).

Belongs to the monovalent cation:proton antiporter 1 (CPA1) transporter (TC 2.A.36) family. Homodimer; phosphatidylinositol-4,5-bisphosphate (PIP2) and phosphatidylinositol 3,4,5-trisphosphate (PIP3) could be involved in the dimer stabilization. Interacts (via the C-terminus) with RACK1. Interacts with CHP1. Expressed in hair bundles and in vestibular hair bundles. Expressed in brain.

It localises to the late endosome membrane. The protein localises to the early endosome membrane. Its subcellular location is the recycling endosome membrane. The protein resides in the cell membrane. It is found in the cytoplasmic vesicle. It localises to the phagosome membrane. It carries out the reaction Na(+)(in) + H(+)(out) = Na(+)(out) + H(+)(in). The catalysed reaction is K(+)(in) + H(+)(out) = K(+)(out) + H(+)(in). In terms of biological role, endosomal Na(+), K(+)/H(+) antiporter. Mediates the electroneutral exchange of endosomal luminal H(+) for a cytosolic Na(+) or K(+). By facilitating proton efflux, SLC9A9 counteracts the acidity generated by vacuolar (V)-ATPase, thereby limiting luminal acidification. Regulates organellar pH and consequently, endosome maturation and endocytic trafficking of plasma membrane receptors and neurotransporters. Promotes the recycling of transferrin receptors back to the cell surface to facilitate additional iron uptake in the brain. Regulates synaptic transmission by regulating the luminal pH of axonal endosomes. Regulates phagosome lumenal pH, thus affecting phagosome maturation, and consequently, microbicidal activity in macrophages. Can also be active at the cell surface of specialized cells, e.g., in the inner ear hair bundles uses the high K(+) of the endolymph to regulate intracelular pH. This is Sodium/hydrogen exchanger 9 (Slc9a9) from Rattus norvegicus (Rat).